The primary structure comprises 873 residues: V-type proton ATPase 116 kDa subunit a 2 (873 aa).

Residues Met-1–Ser-407 lie on the Cytoplasmic side of the membrane. Residues Cys-408–Leu-428 form a helical membrane-spanning segment. The Lumenal portion of the chain corresponds to Arg-429–Met-445. Residues Phe-446–Ile-466 form a helical membrane-spanning segment. The Cytoplasmic segment spans residues Tyr-467–Lys-543. A helical membrane pass occupies residues Met-544–Phe-564. 2 N-linked (GlcNAc...) asparagine glycosylation sites follow: Asn-565 and Asn-569. Residues Asn-565–Asp-574 are Lumenal-facing. Residues Ile-575–Leu-595 traverse the membrane as a helical segment. The Cytoplasmic portion of the chain corresponds to Gln-596–Gln-614. A helical membrane pass occupies residues Ile-615–Met-635. At Lys-636 to Gln-668 the chain is on the lumenal side. A helical transmembrane segment spans residues Ser-669 to Gly-689. Over Lys-690 to Gln-785 the chain is Cytoplasmic. The helical transmembrane segment at Leu-786–Ala-806 threads the bilayer. Gly-807 is a topological domain (lumenal). A helical transmembrane segment spans residues Phe-808–Leu-828. The Cytoplasmic portion of the chain corresponds to Met-829 to Ala-873.

It belongs to the V-ATPase 116 kDa subunit family. In terms of assembly, V-ATPase is a heteromultimeric enzyme made up of two complexes: the ATP-hydrolytic V1 complex and the proton translocation V0 complex. The V1 complex consists of three catalytic AB heterodimers that form a heterohexamer, three peripheral stalks each consisting of EG heterodimers, one central rotor including subunits D and F, and the regulatory subunits C and H. The proton translocation complex V0 consists of the proton transport subunit a, a ring of proteolipid subunits c9c'', rotary subunit d, subunits e and f, and the accessory subunits vah-19/Ac45 and vah-20/PRR. Interacts with V-type proton ATPase subunit C vha-11. In terms of tissue distribution, expressed in the H-shaped excretory cell (at protein level). Expressed in hypodermal cells around the vulva. Expressed in the main epidermal syncytium. Expressed in the sheath cells associated with head and tail sensory organs; specifically, expressed in the apical sheath cells of the amphids and CEP neuron and in the sheath cells of the OLQ sensory organ.

The protein localises to the apical cell membrane. It is found in the endosome. Its subcellular location is the multivesicular body membrane. In terms of biological role, subunit of the V0 complex of vacuolar(H+)-ATPase (V-ATPase), a multisubunit enzyme composed of a peripheral complex (V1) that hydrolyzes ATP and a membrane integral complex (V0) that translocates protons. V-ATPase is responsible for acidifying and maintaining the pH of intracellular compartments and in some cell types, is targeted to the plasma membrane, where it is responsible for acidifying the extracellular environment. Involved in the assembly of the V-ATPase complex. The V-ATPase is required for the function of the excretory canal. Independently of the V1 complex, the V0 complex of the V-ATPase is required for multivesicular body membrane fusion with the apical membrane of the epidermal cells during exosome release and thus regulates the release of cuticle components such as Hedgehog-related peptide wrt-2 but not collagen. Also, in the epidermis, regulates the trafficking of che-14 and rdy-2. Regulates the secretion of granular material found in the amphid channel and in controlling osmoregulation in the amphid pocket. The protein is V-type proton ATPase 116 kDa subunit a 2 of Caenorhabditis elegans.